The sequence spans 337 residues: Heme A synthase (337 aa).

The next 5 helical transmembrane spans lie at 6-26, 87-107, 119-139, 154-174, and 192-212; these read ITKW…IGGI, FIHR…LIYF, LPYI…WYMV, LAFH…QLIK, and LIFS…GALV. H256 is a binding site for heme. The next 3 helical transmembrane spans lie at 258–278, 285–305, and 308–328; these read LVGY…LKIE, IAYF…ITLL, and VPII…SIII. H316 serves as a coordination point for heme.

Belongs to the COX15/CtaA family. Type 2 subfamily. Interacts with CtaB. Requires heme b as cofactor.

The protein localises to the cell membrane. It catalyses the reaction Fe(II)-heme o + 2 A + H2O = Fe(II)-heme a + 2 AH2. It participates in porphyrin-containing compound metabolism; heme A biosynthesis; heme A from heme O: step 1/1. In terms of biological role, catalyzes the conversion of heme O to heme A by two successive hydroxylations of the methyl group at C8. The first hydroxylation forms heme I, the second hydroxylation results in an unstable dihydroxymethyl group, which spontaneously dehydrates, resulting in the formyl group of heme A. In Rickettsia africae (strain ESF-5), this protein is Heme A synthase.